The sequence spans 388 residues: Chorismate synthase (388 aa).

The NADP(+) site is built by arginine 39 and arginine 45. FMN is bound by residues 130–132 (RSS), 251–252 (NA), glycine 296, 311–315 (KPIPT), and arginine 337.

The protein belongs to the chorismate synthase family. In terms of assembly, homotetramer. The cofactor is FMNH2.

It catalyses the reaction 5-O-(1-carboxyvinyl)-3-phosphoshikimate = chorismate + phosphate. It functions in the pathway metabolic intermediate biosynthesis; chorismate biosynthesis; chorismate from D-erythrose 4-phosphate and phosphoenolpyruvate: step 7/7. Its function is as follows. Catalyzes the anti-1,4-elimination of the C-3 phosphate and the C-6 proR hydrogen from 5-enolpyruvylshikimate-3-phosphate (EPSP) to yield chorismate, which is the branch point compound that serves as the starting substrate for the three terminal pathways of aromatic amino acid biosynthesis. This reaction introduces a second double bond into the aromatic ring system. The sequence is that of Chorismate synthase from Streptococcus agalactiae serotype Ia (strain ATCC 27591 / A909 / CDC SS700).